Here is a 570-residue protein sequence, read N- to C-terminus: Serine/threonine-protein kinase Pink1, mitochondrial (570 aa).

The transit peptide at 1-5 directs the protein to the mitochondrion; it reads MSVRA. Residues 6–96 are Mitochondrial intermembrane-facing; that stretch reads VGSRLFKHGR…AELRKKATRR (91 aa). Residues 97-120 form a helical membrane-spanning segment; the sequence is ILFGDSAPFFALVGVSIASGTGIL. At 121 to 570 the chain is on the cytoplasmic side; sequence TKEEELEGVC…WIQENLPELD (450 aa). Residues 162-484 enclose the Protein kinase domain; that stretch reads LSLGKPIAKG…VAANVCQLFL (323 aa). Lys196 is a binding site for ATP. At Ser205 the chain carries Phosphoserine; by autocatalysis. A Mg(2+)-binding site is contributed by Glu217. Lys295, Tyr297, and Asn300 together coordinate ATP. Asp337 acts as the Proton acceptor in catalysis. Asp341 serves as a coordination point for ATP. Mg(2+) is bound by residues Asn342 and Asp359. Asp359 contributes to the ATP binding site. Residue Ser377 is modified to Phosphoserine; by autocatalysis. The residue at position 386 (Thr386) is a Phosphothreonine; by autocatalysis. Thr530 carries the phosphothreonine modification.

Belongs to the protein kinase superfamily. Ser/Thr protein kinase family. The cofactor is Mg(2+). Post-translationally, proteolytically cleaved. In healthy cells, the precursor is continuously imported into mitochondria where it is proteolytically cleaved into its short form by the mitochondrial rhomboid protease rho-7 (TcasGA2_TC013516). The short form is then released into the cytosol where it rapidly undergoes proteasome-dependent degradation. In unhealthy cells, when cellular stress conditions lead to the loss of mitochondrial membrane potential, mitochondrial import is impaired leading to the precursor accumulating on the outer mitochondrial membrane (OMM). Autophosphorylated on Ser-205, which activates kinase activity and is required for substrate recognition. Loss of mitochondrial membrane potential results in the precursor accumulating on the outer mitochondrial membrane (OMM) where it is activated by autophosphorylation at Ser-205. Autophosphorylation is sufficient and essential for selective recruitment of park to depolarized mitochondria, likely via Pink1-dependent phosphorylation of polyubiquitin chains. Also autophosphorylated at Ser-377, Thr-386 and possibly Thr-530. Another report found evidence of autophosphorylation at Ser-154, Thr-186, Thr-218, Ser-267 and Thr-530, as well as a number of other minor sites, but determined that phosphorylation at these sites is not required for enzyme activity and may not occur in vivo.

It localises to the mitochondrion outer membrane. Its subcellular location is the mitochondrion inner membrane. The protein localises to the cytoplasm. The protein resides in the cytosol. The catalysed reaction is L-seryl-[protein] + ATP = O-phospho-L-seryl-[protein] + ADP + H(+). The enzyme catalyses L-threonyl-[protein] + ATP = O-phospho-L-threonyl-[protein] + ADP + H(+). In terms of biological role, acts as a serine/threonine-protein kinase. Exhibits a substrate preference for proline at position P+1 and a general preference at several residues for basic residues such as arginine. Also exhibits moderate preferences for a phosphotyrosine at position P-3 and a tryptophan at P-5. Critical to mitochondrial homeostasis it mediates several pathways that maintain mitochondrial health and function. Protects against mitochondrial dysfunction during cellular stress by phosphorylating mitochondrial proteins such as park and likely Drp1, to coordinate mitochondrial quality control mechanisms that remove and replace dysfunctional mitochondrial components. Depending on the severity of mitochondrial damage and/or dysfunction, activity ranges from preventing apoptosis and stimulating mitochondrial biogenesis to regulating mitochondrial dynamics and eliminating severely damaged mitochondria via mitophagy. Appears to be particularly important in maintaining the physiology and function of cells with high energy demands that are undergoing stress or altered metabolic environment, including spermatids, muscle cells and neurons such as the dopaminergic (DA) neurons. Mediates the translocation and activation of park at the outer membrane (OMM) of dysfunctional/depolarized mitochondria. At the OMM of damaged mitochondria, phosphorylates pre-existing polyubiquitin chains, the Pink1-phosphorylated polyubiquitin then recruits park from the cytosol to the OMM where park is fully activated by phosphorylation at 'Ser-80' by Pink1. When cellular stress results in irreversible mitochondrial damage, functions with park to promote the clearance of dysfunctional and/or depolarized mitochondria by selective autophagy (mitophagy). The Pink1-park pathway also promotes fission and/or inhibits fusion of damaged mitochondria, by phosphorylating and thus promoting the park-dependent degradation of proteins involved in mitochondrial fusion/fission such as Marf, Opa1 and fzo. This prevents the refusion of unhealthy mitochondria with the mitochondrial network or initiates mitochondrial fragmentation facilitating their later engulfment by autophagosomes. Also likely to promote mitochondrial fission independently of park and Atg7-mediated mitophagy, via the phosphorylation and activation of Drp1. Regulates motility of damaged mitochondria by phosphorylating Miro which likely promotes its park-dependent degradation by the proteasome; in motor neurons, this inhibits mitochondrial intracellular anterograde transport along the axons which probably increases the chance of the mitochondria being eliminated in the soma. The Pink1-park pathway is also involved in mitochondrial regeneration processes such as promoting mitochondrial biogenesis, activating localized mitochondrial repair, promoting selective turnover of mitochondrial proteins and initiating the mitochondrial import of endogenous proteins. Involved in mitochondrial biogenesis by promoting the park-dependent ubiquitination of transcriptional repressor Paris which leads to its subsequent proteasomal degradation and allows activation of the transcription factor srl. Functions with park to promote localized mitochondrial repair by activating the translation of specific nuclear-encoded mitochondrial RNAs (nc-mtRNAs) on the mitochondrial surface, including several key electron transport chain component nc-mtRNAs. During oogenesis, phosphorylates and inactivates larp on the membrane of defective mitochondria, thus impairing local translation and mtDNA replication and consequently, reducing transmission of deleterious mtDNA mutations to the mature oocyte. Phosphorylates the mitochondrial acyl-CoA dehydrogenase Mcad, and appears to be important for maintaining fatty acid and amino acid metabolism via a mechanism that is independent of it's role in maintaining production of ATP. The sequence is that of Serine/threonine-protein kinase Pink1, mitochondrial from Tribolium castaneum (Red flour beetle).